Consider the following 635-residue polypeptide: DNA-directed RNA polymerase subunit gamma (635 aa).

4 residues coordinate Zn(2+): C74, C76, C89, and C92. Residues D471, D473, and D475 each coordinate Mg(2+).

This sequence belongs to the RNA polymerase beta' chain family. RpoC1 subfamily. In cyanobacteria the RNAP catalytic core is composed of 2 alpha, 1 beta, 1 beta', 1 gamma and 1 omega subunit. When a sigma factor is associated with the core the holoenzyme is formed, which can initiate transcription. The cofactor is Mg(2+). Zn(2+) is required as a cofactor.

The enzyme catalyses RNA(n) + a ribonucleoside 5'-triphosphate = RNA(n+1) + diphosphate. DNA-dependent RNA polymerase catalyzes the transcription of DNA into RNA using the four ribonucleoside triphosphates as substrates. The sequence is that of DNA-directed RNA polymerase subunit gamma from Prochlorococcus marinus (strain NATL2A).